The primary structure comprises 342 residues: Holliday junction branch migration complex subunit RuvB (342 aa).

The tract at residues 1-22 (MTLKPVREVSPGSQEGEERLEQ) is disordered. Residues 1-185 (MTLKPVREVS…FPIQERLGYY (185 aa)) form a large ATPase domain (RuvB-L) region. Residues leucine 24, arginine 25, glycine 66, lysine 69, threonine 70, serine 71, 132–134 (EDY), arginine 175, tyrosine 185, and arginine 222 contribute to the ATP site. Residue threonine 70 coordinates Mg(2+). The interval 186-256 (EPTELREIAV…IVETTLERLE (71 aa)) is small ATPAse domain (RuvB-S). Residues 259-342 (GRGLDAMDRR…RPQGKQGSLI (84 aa)) are head domain (RuvB-H). Residues arginine 295, arginine 314, and arginine 319 each coordinate DNA.

Belongs to the RuvB family. Homohexamer. Forms an RuvA(8)-RuvB(12)-Holliday junction (HJ) complex. HJ DNA is sandwiched between 2 RuvA tetramers; dsDNA enters through RuvA and exits via RuvB. An RuvB hexamer assembles on each DNA strand where it exits the tetramer. Each RuvB hexamer is contacted by two RuvA subunits (via domain III) on 2 adjacent RuvB subunits; this complex drives branch migration. In the full resolvosome a probable DNA-RuvA(4)-RuvB(12)-RuvC(2) complex forms which resolves the HJ.

It localises to the cytoplasm. It catalyses the reaction ATP + H2O = ADP + phosphate + H(+). In terms of biological role, the RuvA-RuvB-RuvC complex processes Holliday junction (HJ) DNA during genetic recombination and DNA repair, while the RuvA-RuvB complex plays an important role in the rescue of blocked DNA replication forks via replication fork reversal (RFR). RuvA specifically binds to HJ cruciform DNA, conferring on it an open structure. The RuvB hexamer acts as an ATP-dependent pump, pulling dsDNA into and through the RuvAB complex. RuvB forms 2 homohexamers on either side of HJ DNA bound by 1 or 2 RuvA tetramers; 4 subunits per hexamer contact DNA at a time. Coordinated motions by a converter formed by DNA-disengaged RuvB subunits stimulates ATP hydrolysis and nucleotide exchange. Immobilization of the converter enables RuvB to convert the ATP-contained energy into a lever motion, pulling 2 nucleotides of DNA out of the RuvA tetramer per ATP hydrolyzed, thus driving DNA branch migration. The RuvB motors rotate together with the DNA substrate, which together with the progressing nucleotide cycle form the mechanistic basis for DNA recombination by continuous HJ branch migration. Branch migration allows RuvC to scan DNA until it finds its consensus sequence, where it cleaves and resolves cruciform DNA. The protein is Holliday junction branch migration complex subunit RuvB of Anaeromyxobacter sp. (strain Fw109-5).